Reading from the N-terminus, the 582-residue chain is DNA mismatch repair protein MutL (582 aa).

Belongs to the DNA mismatch repair MutL/HexB family.

In terms of biological role, this protein is involved in the repair of mismatches in DNA. It is required for dam-dependent methyl-directed DNA mismatch repair. May act as a 'molecular matchmaker', a protein that promotes the formation of a stable complex between two or more DNA-binding proteins in an ATP-dependent manner without itself being part of a final effector complex. This is DNA mismatch repair protein MutL from Buchnera aphidicola subsp. Schizaphis graminum (strain Sg).